We begin with the raw amino-acid sequence, 499 residues long: Lysine--tRNA ligase (499 aa).

Mg(2+) is bound by residues Glu-408 and Glu-415.

The protein belongs to the class-II aminoacyl-tRNA synthetase family. Homodimer. Mg(2+) is required as a cofactor.

The protein resides in the cytoplasm. It carries out the reaction tRNA(Lys) + L-lysine + ATP = L-lysyl-tRNA(Lys) + AMP + diphosphate. In Agrobacterium fabrum (strain C58 / ATCC 33970) (Agrobacterium tumefaciens (strain C58)), this protein is Lysine--tRNA ligase.